Reading from the N-terminus, the 393-residue chain is GDP-4-keto-6-deoxy-D-mannose 3-dehydratase (393 aa).

A GDP-4-dehydro-alpha-D-rhamnose-binding site is contributed by 30–33 (NMFT). The helical transmembrane segment at 53 to 73 (YSVMVSSGSTANLLMIAALFF) threads the bilayer. Residues 60-61 (GS), W92, E166, and S187 each bind pyridoxal 5'-phosphate. The Proton donor/acceptor role is filled by H192. H219 is an L-glutamate binding site. R223 serves as a coordination point for GDP-4-dehydro-alpha-D-rhamnose. N252 contributes to the pyridoxal 5'-phosphate binding site. Residue R254 participates in L-glutamate binding. E333 serves as a coordination point for GDP-4-dehydro-alpha-D-rhamnose.

This sequence belongs to the DegT/DnrJ/EryC1 family. As to quaternary structure, homodimer. It depends on pyridoxal 5'-phosphate as a cofactor.

Its subcellular location is the cell membrane. It carries out the reaction GDP-4-dehydro-alpha-D-rhamnose + L-glutamate = GDP-4-dehydro-3,6-dideoxy-alpha-D-mannose + 2-oxoglutarate + NH4(+). It functions in the pathway nucleotide-sugar metabolism; GDP-L-colitose biosynthesis. Involved in the biosynthesis of L-colitose, a 3,6-dideoxyhexose present in the O-antigen region of lipopolysaccharides (LPS), where it serves as an antigenic determinant and is vital for bacterial defense and survival. Catalyzes the removal of the C3'-hydroxyl group from GDP-4-keto-6-deoxy-D-mannose via a combined transamination-deoxygenation reaction. The catalysis is initiated by a transamination step in which pyridoxal 5'-phosphate (PLP) is converted to pyridoxamine 5'-phosphate (PMP) in the presence of L-glutamate. This coenzyme then forms a Schiff base with GDP-4-keto-6-deoxy-D-mannose and the resulting adduct undergoes a PMP-mediated beta-dehydration reaction to give a sugar enamine intermediate, which after tautomerization and hydrolysis to release ammonia yields GDP-4-keto-3,6-dideoxy-D-mannose as a product. This Yersinia pseudotuberculosis protein is GDP-4-keto-6-deoxy-D-mannose 3-dehydratase.